We begin with the raw amino-acid sequence, 146 residues long: Kappa-casein (146 aa).

4 O-linked (GalNAc...) threonine glycosylation sites follow: threonine 97, threonine 107, threonine 112, and threonine 118. Residue threonine 121 is modified to Phosphothreonine. A Phosphoserine; alternate modification is found at serine 125. A glycan (O-linked (GalNAc...) serine; alternate) is linked at serine 125. Threonine 142 carries an O-linked (GalNAc...) threonine glycan. Serine 143 carries the phosphoserine modification.

It belongs to the kappa-casein family. As to expression, mammary gland specific. Secreted in milk.

It localises to the secreted. Kappa-casein stabilizes micelle formation, preventing casein precipitation in milk. This Panthera uncia (Snow leopard) protein is Kappa-casein (CSN3).